The following is a 321-amino-acid chain: uncharacterized protein (321 aa).

9 helical membrane-spanning segments follow: residues 12–32 (IGVE…WAAT), 52–72 (LITS…AFLV), 86–106 (ILMS…ILII), 109–129 (LTGL…QQWF), 136–156 (FVIS…LVLA), 168–188 (DSLS…LFVG), 214–234 (WGMI…FTFL), 254–274 (KEIP…GLFF), and 292–312 (IFIC…QIFA).

It localises to the cell membrane. This is an uncharacterized protein from Campylobacter jejuni subsp. jejuni serotype O:2 (strain ATCC 700819 / NCTC 11168).